Here is a 598-residue protein sequence, read N- to C-terminus: UvrABC system protein C (598 aa).

The GIY-YIG domain maps to 13–91 (TLPGVYRMVD…IKGLKPRFNI (79 aa)). Residues 200–235 (TALTEEITAQMNAAAENLDFETAAYLRDRLRMLATV) enclose the UVR domain.

The protein belongs to the UvrC family. Interacts with UvrB in an incision complex.

The protein localises to the cytoplasm. Its function is as follows. The UvrABC repair system catalyzes the recognition and processing of DNA lesions. UvrC both incises the 5' and 3' sides of the lesion. The N-terminal half is responsible for the 3' incision and the C-terminal half is responsible for the 5' incision. This Thiobacillus denitrificans (strain ATCC 25259 / T1) protein is UvrABC system protein C.